We begin with the raw amino-acid sequence, 194 residues long: Holliday junction branch migration complex subunit RuvA (194 aa).

Residues 1–64 (MISRLTGKLV…EDAHLLFGFA (64 aa)) form a domain I region. The tract at residues 65 to 143 (TAEERKTFRQ…AHTVTDGLFA (79 aa)) is domain II. Positions 144–147 (AAPA) are flexible linker. Positions 147–194 (AADETEDIVSTLLALGYSEREAKAAVKGVPEGTDVGEGVRLALKNLLK) are domain III.

It belongs to the RuvA family. As to quaternary structure, homotetramer. Forms an RuvA(8)-RuvB(12)-Holliday junction (HJ) complex. HJ DNA is sandwiched between 2 RuvA tetramers; dsDNA enters through RuvA and exits via RuvB. An RuvB hexamer assembles on each DNA strand where it exits the tetramer. Each RuvB hexamer is contacted by two RuvA subunits (via domain III) on 2 adjacent RuvB subunits; this complex drives branch migration. In the full resolvosome a probable DNA-RuvA(4)-RuvB(12)-RuvC(2) complex forms which resolves the HJ.

The protein localises to the cytoplasm. Its function is as follows. The RuvA-RuvB-RuvC complex processes Holliday junction (HJ) DNA during genetic recombination and DNA repair, while the RuvA-RuvB complex plays an important role in the rescue of blocked DNA replication forks via replication fork reversal (RFR). RuvA specifically binds to HJ cruciform DNA, conferring on it an open structure. The RuvB hexamer acts as an ATP-dependent pump, pulling dsDNA into and through the RuvAB complex. HJ branch migration allows RuvC to scan DNA until it finds its consensus sequence, where it cleaves and resolves the cruciform DNA. In Neisseria meningitidis serogroup B (strain ATCC BAA-335 / MC58), this protein is Holliday junction branch migration complex subunit RuvA.